The chain runs to 306 residues: UDP-N-acetylenolpyruvoylglucosamine reductase (306 aa).

The region spanning 34–198 is the FAD-binding PCMH-type domain; that stretch reads VGGPADLLIT…LEVTFKLHNS (165 aa). R177 is an active-site residue. Catalysis depends on S227, which acts as the Proton donor. Residue E297 is part of the active site.

This sequence belongs to the MurB family. The cofactor is FAD.

It is found in the cytoplasm. It carries out the reaction UDP-N-acetyl-alpha-D-muramate + NADP(+) = UDP-N-acetyl-3-O-(1-carboxyvinyl)-alpha-D-glucosamine + NADPH + H(+). It participates in cell wall biogenesis; peptidoglycan biosynthesis. In terms of biological role, cell wall formation. This is UDP-N-acetylenolpyruvoylglucosamine reductase from Clostridium botulinum (strain ATCC 19397 / Type A).